A 322-amino-acid chain; its full sequence is Epiphycan (322 aa).

Residues 1–19 form the signal peptide; the sequence is MGMLARVALGLIIIDAVLA. Positions 58–108 are disordered; that stretch reads KVSERLSGNRELLTPGPQLGDNQDEDKDEESTPRLIDGSSPQEPEFPGLLG. An O-linked (Xyl...) (dermatan sulfate) serine glycan is attached at Ser64. O-linked (GalNAc...) serine glycosylation is present at Ser96. The 38-residue stretch at 106–143 folds into the LRRNT domain; sequence LLGPHTNEDFPTCLLCTCISTTVYCDDHELDAIPPLPK. A disulfide bond links Cys118 and Cys130. 5 LRR repeats span residues 144–165, 168–189, 192–213, 238–258, and 259–280; these read KTTYFYSRFNRIKKINKNDFAS, DLKRIDLTSNLISEIDEDAFRK, HLQELVLRDNKIKQLPELPNTL, DLHHLYITDNSLDHIPLPLPE, and SLRALHLQNNDILEMHEDTFCN. A disulfide bridge connects residues Cys279 and Cys312. Residues Asn283 and Asn302 are each glycosylated (N-linked (GlcNAc...) asparagine). One copy of the LRR 6 repeat lies at 290–310; the sequence is ALEDIRLDGNPINLSRTPQAY.

Belongs to the small leucine-rich proteoglycan (SLRP) family. SLRP class III subfamily. In terms of processing, the O-linked polysaccharide on Ser-96 is probably the mucin type linked to GalNAc. There is one glycosaminoglycan chain, known to be dermatan sulfate, and it is probably the O-glycosylation at Ser-64. Confined to the middle zone of embryonic epiphyseal cartilage consisting of flattened chondrocytes and the ossifying region in the limb buds of chick embryos. Has also been detected in testis.

It is found in the secreted. It localises to the extracellular space. The protein resides in the extracellular matrix. Functionally, may have a role in bone formation and also in establishing the ordered structure of cartilage through matrix organization. The polypeptide is Epiphycan (Epyc) (Mus musculus (Mouse)).